Here is a 157-residue protein sequence, read N- to C-terminus: uncharacterized protein (157 aa).

4 helical membrane passes run 3-23 (IFSF…MFIS), 24-44 (AFLS…ALAV), 47-67 (LMLG…ATAG), and 105-125 (IALL…IAGW).

This sequence to E.coli YqaA.

It localises to the cell membrane. This is an uncharacterized protein from Haemophilus influenzae (strain ATCC 51907 / DSM 11121 / KW20 / Rd).